The chain runs to 462 residues: Cysteine--tRNA ligase (462 aa).

Cys24 is a binding site for Zn(2+). The 'HIGH' region signature appears at 26–36 (PTVYDDAHLGH). Residues Cys199, His224, and Glu228 each coordinate Zn(2+). The 'KMSKS' region motif lies at 256 to 260 (KMSKS). Residue Lys259 participates in ATP binding.

This sequence belongs to the class-I aminoacyl-tRNA synthetase family. As to quaternary structure, monomer. The cofactor is Zn(2+).

The protein resides in the cytoplasm. It catalyses the reaction tRNA(Cys) + L-cysteine + ATP = L-cysteinyl-tRNA(Cys) + AMP + diphosphate. The sequence is that of Cysteine--tRNA ligase (cysS) from Campylobacter jejuni subsp. jejuni serotype O:2 (strain ATCC 700819 / NCTC 11168).